Here is a 537-residue protein sequence, read N- to C-terminus: Exoglucanase 1 (537 aa).

An N-terminal signal peptide occupies residues 1 to 18 (MKGSISYQIYKGALLLSA). Positions 19–453 (LLNSVSAQQV…YVIYSNIKTG (435 aa)) are catalytic. A glycan (N-linked (GlcNAc...) asparagine) is linked at Asn-136. Glu-235 acts as the Nucleophile in catalysis. Glu-240 acts as the Proton donor in catalysis. 2 N-linked (GlcNAc...) asparagine glycosylation sites follow: Asn-414 and Asn-456. The interval 454–477 (PLNSTFTGGTTSSSSTTTTTSKST) is linker. Over residues 458 to 502 (TFTGGTTSSSSTTTTTSKSTSTSSSSKTTTTVTTTTTSSGSSGTG) the composition is skewed to low complexity. The interval 458-503 (TFTGGTTSSSSTTTTTSKSTSTSSSSKTTTTVTTTTTSSGSSGTGA) is disordered. Residues 501 to 537 (TGARDWAQCGGNGWTGPTTCVSPYTCTKQNDWYSQCL) enclose the CBM1 domain. Cystine bridges form between Cys-509–Cys-526 and Cys-520–Cys-536.

Belongs to the glycosyl hydrolase 7 (cellulase C) family.

The protein resides in the secreted. It carries out the reaction Hydrolysis of (1-&gt;4)-beta-D-glucosidic linkages in cellulose and cellotetraose, releasing cellobiose from the non-reducing ends of the chains.. In Penicillium janthinellum (Penicillium vitale), this protein is Exoglucanase 1 (cbh1).